Reading from the N-terminus, the 283-residue chain is Zip homologous protein 4 (283 aa).

The RING-type zinc-finger motif lies at 6-50; the sequence is CFRCYKFPSKQIEFYLTNCMHMFCIECERLCHPPEEEPLKCIQCS. 2 disordered regions span residues 149 to 175 and 201 to 283; these read KKQLAEQAPPPQTPPRSNSLKVASSRS and TKAQ…RNSQ. Polar residues predominate over residues 163–175; sequence PRSNSLKVASSRS. A compositionally biased stretch (low complexity) spans 202-216; the sequence is KAQAKAEAEAEAPAK. Residues 220–235 are compositionally biased toward polar residues; it reads SKAQTTKCTSNYQSHP. A compositionally biased stretch (basic and acidic residues) spans 267–283; that stretch reads KKHEAQREKHKEHRNSQ.

Interacts with zhp-3; the interaction is required for their localization along paired chromosomes and stability, and for the formation of chiasma during meiotic recombination. Expressed in the germline.

It is found in the chromosome. Recruited co-dependently with zhp-3 to the synaptonemal complex between homologous chromosome pairs to regulate the formation and number of crossover events between homologs during meiotic recombination. In the early stages of pachytene, in complex with zhp-4, recruited by the zhp-1-zhp-2 heterodimer to designated crossover sites along the recombination intermediate to stabilize other pro-crossover factors such as rmh-1, msh-5 and cosa-1. This in turn facilitates crossover and promotes the formation of chiasma in each meiotic nucleus at the late pachytene stage of meiosis. Negatively regulates double strand break formation to promote formation of the crossover intermediate. The sequence is that of Zip homologous protein 4 from Caenorhabditis elegans.